The following is a 64-amino-acid chain: U9-ctenitoxin-Pr1a (64 aa).

Disulfide bonds link cysteine 3-cysteine 15, cysteine 9-cysteine 24, cysteine 14-cysteine 47, cysteine 34-cysteine 55, and cysteine 49-cysteine 61.

As to expression, expressed by the venom gland.

The protein localises to the secreted. Functionally, non-toxic to mice and insects. This Phoneutria reidyi (Brazilian Amazonian armed spider) protein is U9-ctenitoxin-Pr1a.